The chain runs to 79 residues: Small ribosomal subunit protein bS18 (79 aa).

This sequence belongs to the bacterial ribosomal protein bS18 family. As to quaternary structure, part of the 30S ribosomal subunit. Forms a tight heterodimer with protein bS6.

Its function is as follows. Binds as a heterodimer with protein bS6 to the central domain of the 16S rRNA, where it helps stabilize the platform of the 30S subunit. The protein is Small ribosomal subunit protein bS18 of Rhodopseudomonas palustris (strain BisB18).